A 68-amino-acid chain; its full sequence is Potassium channel toxin epsilon-KTx 1.2 (68 aa).

A signal peptide spans methionine 1–alanine 26. Intrachain disulfides connect cysteine 30/cysteine 38, cysteine 33/cysteine 54, cysteine 37/cysteine 47, and cysteine 42/cysteine 52. Tyrosine 55 is subject to Tyrosine amide. A propeptide spanning residues arginine 57–glutamine 68 is cleaved from the precursor.

It belongs to the short scorpion toxin superfamily. Potassium channel inhibitor family. Epsilon-KTx 01 subfamily. Expressed by the venom gland.

It is found in the secreted. Functionally, potassium channel blocker. At 3 uM, this toxin blocks voltage-gated potassium channels rKv1.2/KCNA2 (5%), hKv1.3/KCNA3 (10%),rKv1.4/KCNA4 (20%), Kv11/hERG (24%), and Shaker-IR (27%). This Tityus serrulatus (Brazilian scorpion) protein is Potassium channel toxin epsilon-KTx 1.2.